The sequence spans 143 residues: Large ribosomal subunit protein uL15 (143 aa).

Residues 1–52 (MELNSIQPADGAKHYKRRVGRGIGSGLGKTSGRGHKGQKSRSGGFHKVGFEG) form a disordered region. The segment covering 21 to 31 (RGIGSGLGKTS) has biased composition (gly residues).

The protein belongs to the universal ribosomal protein uL15 family. In terms of assembly, part of the 50S ribosomal subunit.

Its function is as follows. Binds to the 23S rRNA. The chain is Large ribosomal subunit protein uL15 from Janthinobacterium sp. (strain Marseille) (Minibacterium massiliensis).